Consider the following 282-residue polypeptide: Acetyl-coenzyme A carboxylase carboxyl transferase subunit beta (282 aa).

The CoA carboxyltransferase N-terminal domain occupies Val-25–Gln-282. Positions 29, 32, 48, and 51 each coordinate Zn(2+). The C4-type zinc-finger motif lies at Cys-29–Cys-51.

The protein belongs to the AccD/PCCB family. As to quaternary structure, acetyl-CoA carboxylase is a heterohexamer composed of biotin carboxyl carrier protein (AccB), biotin carboxylase (AccC) and two subunits each of ACCase subunit alpha (AccA) and ACCase subunit beta (AccD). Requires Zn(2+) as cofactor.

It is found in the cytoplasm. The enzyme catalyses N(6)-carboxybiotinyl-L-lysyl-[protein] + acetyl-CoA = N(6)-biotinyl-L-lysyl-[protein] + malonyl-CoA. It participates in lipid metabolism; malonyl-CoA biosynthesis; malonyl-CoA from acetyl-CoA: step 1/1. Functionally, component of the acetyl coenzyme A carboxylase (ACC) complex. Biotin carboxylase (BC) catalyzes the carboxylation of biotin on its carrier protein (BCCP) and then the CO(2) group is transferred by the transcarboxylase to acetyl-CoA to form malonyl-CoA. The sequence is that of Acetyl-coenzyme A carboxylase carboxyl transferase subunit beta from Syntrophotalea carbinolica (strain DSM 2380 / NBRC 103641 / GraBd1) (Pelobacter carbinolicus).